The sequence spans 277 residues: Phosphoenolpyruvate synthase regulatory protein (277 aa).

157–164 is an ADP binding site; that stretch reads GVSRCGKT.

This sequence belongs to the pyruvate, phosphate/water dikinase regulatory protein family. PSRP subfamily.

The enzyme catalyses [pyruvate, water dikinase] + ADP = [pyruvate, water dikinase]-phosphate + AMP + H(+). It carries out the reaction [pyruvate, water dikinase]-phosphate + phosphate + H(+) = [pyruvate, water dikinase] + diphosphate. In terms of biological role, bifunctional serine/threonine kinase and phosphorylase involved in the regulation of the phosphoenolpyruvate synthase (PEPS) by catalyzing its phosphorylation/dephosphorylation. This is Phosphoenolpyruvate synthase regulatory protein from Escherichia fergusonii (strain ATCC 35469 / DSM 13698 / CCUG 18766 / IAM 14443 / JCM 21226 / LMG 7866 / NBRC 102419 / NCTC 12128 / CDC 0568-73).